The following is a 69-amino-acid chain: MTFYNYLMRHRAPVEKDDATRLANLVFQDPLFPKQSKDFDEISTYLETEAPFYFNLTLFDNVWLSYLEA.

It belongs to the UPF0346 family.

In Lactococcus lactis subsp. cremoris (strain MG1363), this protein is UPF0346 protein llmg_2280.